Reading from the N-terminus, the 343-residue chain is 3-dehydroquinate synthase (343 aa).

NAD(+) contacts are provided by residues 61-66 (SGEKYK), 95-99 (GVISD), 119-120 (TT), Lys132, Lys141, and 159-162 (FLKT). The Zn(2+) site is built by Glu174, His231, and His248.

Belongs to the sugar phosphate cyclases superfamily. Dehydroquinate synthase family. Requires Co(2+) as cofactor. It depends on Zn(2+) as a cofactor. The cofactor is NAD(+).

The protein resides in the cytoplasm. The catalysed reaction is 7-phospho-2-dehydro-3-deoxy-D-arabino-heptonate = 3-dehydroquinate + phosphate. The protein operates within metabolic intermediate biosynthesis; chorismate biosynthesis; chorismate from D-erythrose 4-phosphate and phosphoenolpyruvate: step 2/7. Its function is as follows. Catalyzes the conversion of 3-deoxy-D-arabino-heptulosonate 7-phosphate (DAHP) to dehydroquinate (DHQ). This is 3-dehydroquinate synthase from Helicobacter pylori (strain G27).